The primary structure comprises 1143 residues: Condensin-2 complex subunit G2 (1143 aa).

The residue at position 30 (Ser-30) is a Phosphoserine. The stretch at 460–498 (LLPALRYSLHDNSEKVRVAFVDMLLKIKAVRAAKFWKIC) is one HEAT repeat. Phosphothreonine occurs at positions 805 and 1119.

As to quaternary structure, component of the condensin-2 complex, which contains the SMC2 and SMC4 heterodimer, and 3 non SMC subunits that probably regulate the complex: NCAPH2, NCAPD3 and NCAPG2.

The protein resides in the nucleus. In terms of biological role, regulatory subunit of the condensin-2 complex, a complex which establishes mitotic chromosome architecture and is involved in physical rigidity of the chromatid axis. This is Condensin-2 complex subunit G2 (NCAPG2) from Homo sapiens (Human).